The following is a 357-amino-acid chain: MKVDPNKEKALAAVLSQIEKQFGKGSIMKLGEDRSMDVETISTGSLSLDVALGAGGLPMGRIVEIYGPESSGKTTLTLEVIAAAQREGKTCAFIDAEHALDPIYAKKLGVDIDNLLCSQPDTGEQALEICDALTRSGAVDVIIVDSVAALTPKAEIEGEIGDSHMGLAARMMSQAMRKLAGNLKQSNTLLIFINQIRMKIGVMFGNPETTTGGNALKFYASVRLDIRRTGAIKEGDEVVGNETRVKVVKNKVAAPFKQAEFQILYGQGINRTGELVDLGVAHKLIEKAGAWYSYKGDKIGQGRANAGKYLTENPAIAAEIDKTLRELLLSNPAALSSSASDDENSEGNVDFETGEVF.

67–74 (GPESSGKT) contacts ATP. A disordered region spans residues 335–357 (LSSSASDDENSEGNVDFETGEVF).

The protein belongs to the RecA family.

The protein resides in the cytoplasm. In terms of biological role, can catalyze the hydrolysis of ATP in the presence of single-stranded DNA, the ATP-dependent uptake of single-stranded DNA by duplex DNA, and the ATP-dependent hybridization of homologous single-stranded DNAs. It interacts with LexA causing its activation and leading to its autocatalytic cleavage. The sequence is that of Protein RecA from Shewanella sp. (strain MR-4).